The primary structure comprises 59 residues: uncharacterized protein (59 aa).

Its subcellular location is the mitochondrion. This is an uncharacterized protein from Ascobolus immersus.